The sequence spans 1295 residues: MNKIYSIKYSAATGGLIAVSELAKKVICKTNRKISAALLSLAVISYTNIIYAANMDISKAWARDYLDLAQNKGVFQPGSTHVKIKLKDGTDFSFPALPVPDFSSATANGAATSIGGAYAVTVAHNAKNKSSANYQTYGSTQYTQINRMTTGNDFSIQRLNKYVVETRGADTSFNYNENNQNIIDRYGVDVGNGKKEIIGFRVGSGNTTFSGIKTSQTYQADLLSASLFHITNLRANTVGGNKVEYENDSYFTNLTTNGDSGSGVYVFDNKEDKWVLLGTTHGIIGNGKTQKTYVTPFDSKTTNELKQLFIQNVNIDNNTATIGGGKITIGNTTQDIEKNKNNQNKDLVFSGGGKISLKENLDLGYGGFIFDENKKYTVSAEGNNNVTFKGAGIDIGKGSTVDWNIKYASNDALHKIGEGSLNVIQAQNTNLKTGNGTVILGAQKTFNNIYVAGGPGTVQLNAENALGEGDYAGIFFTENGGKLDLNGHNQTFKKIAATDSGTTITNSNTTKESVLSVNNQNNYIYHGNVDGNVRLEHHLDTKQDNARLILDGDIQANSISIKNAPLVMQGHATDHAIFRTTKTNNCPEFLCGVDWVTRIKNAENSVNQKNKTTYKSNNQVSDLSQPDWETRKFRFDNLNIEDSSLSIARNADVEGNIQAKNSVINIGDKTAYIDLYSGKNITGAGFTFRQDIKSGDSIGESKFTGGIMATDGSISIGDKAIVTLNTVSSLDRTALTIHKGANVTASSSLFTTSNIKSGGDLTLTGATESTGEITPSMFYAAGGYELTEDGANFTAKNQASVTGDIKSEKAAKLSFGSADKDNSATRYSQFALAMLDGFDTSYQGSIKAAQSSLAMNNALWKVTGNSELKKLNSTGSMVLFNGGKNIFNTLTVDELTTSNSAFVMRTNTQQADQLIVKNKLEGANNLLLVDFIEKKGNDKNGLNIDLVKAPENTSKDVFKTETQTIGFSDVTPEIKQQEKDGKSVWTLTGYKTVANADAAKKATSLMSGGYKAFLAEVNNLNKRMGDLRDINGEAGAWARIMSGTGSAGGGFSDNYTHVQVGADNKHELDGLDLFTGVTMTYTDSHAGSDAFSGETKSVGAGLYASAMFESGAYIDLIGKYVHHDNEYTATFAGLGTRDYSSHSWYAGAEVGYRYHVTDSAWIEPQAELVYGAVSGKQFSWKDQGMNLTMKDKDFNPLIGRTGVDVGKSFSGKDWKVTARAGLGYQFDLFANGETVLRDASGEKRIKGEKDGRMLMNVGLNAEIRDNVRFGLEFEKSAFGKYNVDNAINANFRYSF.

Positions 1–52 are cleaved as a signal peptide; that stretch reads MNKIYSIKYSAATGGLIAVSELAKKVICKTNRKISAALLSLAVISYTNIIYA. Residues 54-304 form the Peptidase S6 domain; the sequence is NMDISKAWAR…TPFDSKTTNE (251 aa). Residues H124, D153, and S260 each act as charge relay system in the active site. Residues 1029–1295 form the Autotransporter domain; sequence DINGEAGAWA…AINANFRYSF (267 aa).

Post-translationally, cleaved to release the mature protein from the outer membrane.

The protein resides in the periplasm. Its subcellular location is the secreted. It localises to the cell surface. The protein localises to the cell outer membrane. Its activity is regulated as follows. Inhibition of cytotoxic activity by phenylmethylsulfonyl fluoride. Its function is as follows. Serine protease with enterotoxic and cytotoxic activity. Internalization into the host cell is required for the induction of cytopathic effects. However, the serine activity is not necessary for secretion and internalization into the host cell. The protein is Serine protease pet autotransporter (pet) of Escherichia coli O44:H18 (strain 042 / EAEC).